A 646-amino-acid polypeptide reads, in one-letter code: Exoribonuclease 2 (646 aa).

Positions 191 to 518 (RIDLTALDFV…NHRLLKAIIQ (328 aa)) constitute an RNB domain. In terms of domain architecture, S1 motif spans 563–645 (DKTFSAEIVD…ETRNIVARPV (83 aa)).

It belongs to the RNR ribonuclease family. RNase II subfamily.

The protein localises to the cytoplasm. It carries out the reaction Exonucleolytic cleavage in the 3'- to 5'-direction to yield nucleoside 5'-phosphates.. In terms of biological role, involved in mRNA degradation. Hydrolyzes single-stranded polyribonucleotides processively in the 3' to 5' direction. The chain is Exoribonuclease 2 from Xenorhabdus bovienii (strain SS-2004) (Xenorhabdus nematophila subsp. bovienii).